The following is a 148-amino-acid chain: Lysozyme C (148 aa).

The signal sequence occupies residues 1–18; it reads MKVLIILGLVLLSVMVQG. One can recognise a C-type lysozyme domain in the interval 19–148; the sequence is KVFERCELAR…VSQYVQGCGV (130 aa). Cystine bridges form between C24–C146, C48–C134, C83–C99, and C95–C113. Catalysis depends on residues E53 and D71.

The protein belongs to the glycosyl hydrolase 22 family. As to quaternary structure, monomer.

The enzyme catalyses Hydrolysis of (1-&gt;4)-beta-linkages between N-acetylmuramic acid and N-acetyl-D-glucosamine residues in a peptidoglycan and between N-acetyl-D-glucosamine residues in chitodextrins.. Functionally, lysozymes have primarily a bacteriolytic function; those in tissues and body fluids are associated with the monocyte-macrophage system and enhance the activity of immunoagents. The protein is Lysozyme C (LYZ) of Callithrix jacchus (White-tufted-ear marmoset).